We begin with the raw amino-acid sequence, 247 residues long: Ubiquinone biosynthesis O-methyltransferase (247 aa).

4 residues coordinate S-adenosyl-L-methionine: arginine 41, glycine 72, aspartate 93, and methionine 136.

Belongs to the methyltransferase superfamily. UbiG/COQ3 family.

The enzyme catalyses a 3-demethylubiquinol + S-adenosyl-L-methionine = a ubiquinol + S-adenosyl-L-homocysteine + H(+). The catalysed reaction is a 3-(all-trans-polyprenyl)benzene-1,2-diol + S-adenosyl-L-methionine = a 2-methoxy-6-(all-trans-polyprenyl)phenol + S-adenosyl-L-homocysteine + H(+). It participates in cofactor biosynthesis; ubiquinone biosynthesis. In terms of biological role, O-methyltransferase that catalyzes the 2 O-methylation steps in the ubiquinone biosynthetic pathway. The polypeptide is Ubiquinone biosynthesis O-methyltransferase (Bartonella quintana (strain Toulouse) (Rochalimaea quintana)).